The primary structure comprises 358 residues: Fructose-bisphosphate aldolase 1, cytoplasmic (358 aa).

Residue R39 coordinates substrate. The Proton acceptor role is filled by E183. Catalysis depends on K225, which acts as the Schiff-base intermediate with dihydroxyacetone-P. Residues 266 to 268 and R298 each bind substrate; that span reads SGG.

The protein belongs to the class I fructose-bisphosphate aldolase family. Homotetramer. Expressed in callus.

The protein resides in the cytoplasm. Its subcellular location is the cytosol. It catalyses the reaction beta-D-fructose 1,6-bisphosphate = D-glyceraldehyde 3-phosphate + dihydroxyacetone phosphate. Its pathway is carbohydrate degradation; glycolysis; D-glyceraldehyde 3-phosphate and glycerone phosphate from D-glucose: step 4/4. In terms of biological role, fructose-bisphosphate aldolase that plays a key role in glycolysis and gluconeogenesis. Involved in gibberellin-mediated root growth. May be regulated by CDPK13. Associates with vacuolar proton ATPase (V-ATPase) and may regulate the V-ATPase-mediated control of root cell elongation. The protein is Fructose-bisphosphate aldolase 1, cytoplasmic of Oryza sativa subsp. japonica (Rice).